Reading from the N-terminus, the 116-residue chain is Large ribosomal subunit protein uL18 (116 aa).

The protein belongs to the universal ribosomal protein uL18 family. In terms of assembly, part of the 50S ribosomal subunit; part of the 5S rRNA/L5/L18/L25 subcomplex. Contacts the 5S and 23S rRNAs.

This is one of the proteins that bind and probably mediate the attachment of the 5S RNA into the large ribosomal subunit, where it forms part of the central protuberance. The sequence is that of Large ribosomal subunit protein uL18 from Psychromonas ingrahamii (strain DSM 17664 / CCUG 51855 / 37).